Reading from the N-terminus, the 290-residue chain is Probable adenylate kinase 2, chloroplastic (290 aa).

A compositionally biased stretch (low complexity) spans 1-10 (MASSMAATAT). Positions 1 to 37 (MASSMAATATLSPPVLSAERPTVRGGLFLPPSPATSR) are disordered. A chloroplast-targeting transit peptide spans 1 to 61 (MASSMAATAT…ATRKPRSLPR (61 aa)). Residue 83-88 (ASGKGT) coordinates ATP. Residues 103 to 132 (SAGDLLRAEIAAGSENGKRAKEFMEKGQLV) form an NMP region. Residues Arg109, 130-132 (QLV), 159-162 (GYPR), and Gln166 each bind AMP. ATP-binding positions include Arg193, Arg197, and 206–207 (IY). Residues 196–229 (GRRLDPVTGKIYHLKYSPPENEEIASRLTQRFDD) are LID. Residues Arg226 and Arg237 each coordinate AMP.

This sequence belongs to the adenylate kinase family.

The protein localises to the plastid. It is found in the chloroplast. It carries out the reaction AMP + ATP = 2 ADP. Its function is as follows. Catalyzes the reversible transfer of the terminal phosphate group between ATP and AMP. Plays an important role in cellular energy homeostasis and in adenine nucleotide metabolism. This Oryza sativa subsp. japonica (Rice) protein is Probable adenylate kinase 2, chloroplastic.